The sequence spans 189 residues: Shikimate kinase (189 aa).

Glycine 11–alanine 16 serves as a coordination point for ATP. Mg(2+) is bound at residue serine 15. Substrate contacts are provided by aspartate 33, arginine 57, and glycine 79. Arginine 117 serves as a coordination point for ATP. Arginine 135 serves as a coordination point for substrate.

This sequence belongs to the shikimate kinase family. In terms of assembly, monomer. Mg(2+) serves as cofactor.

It is found in the cytoplasm. It catalyses the reaction shikimate + ATP = 3-phosphoshikimate + ADP + H(+). Its pathway is metabolic intermediate biosynthesis; chorismate biosynthesis; chorismate from D-erythrose 4-phosphate and phosphoenolpyruvate: step 5/7. Catalyzes the specific phosphorylation of the 3-hydroxyl group of shikimic acid using ATP as a cosubstrate. In Desulforudis audaxviator (strain MP104C), this protein is Shikimate kinase.